Consider the following 948-residue polypeptide: Probable DNA-directed RNA polymerase (948 aa).

Catalysis depends on residues D600, K680, and D853.

This sequence belongs to the phage and mitochondrial RNA polymerase family.

It localises to the mitochondrion. It catalyses the reaction RNA(n) + a ribonucleoside 5'-triphosphate = RNA(n+1) + diphosphate. Functionally, DNA-dependent RNA polymerase catalyzes the transcription of DNA into RNA using the four ribonucleoside triphosphates as substrates. The protein is Probable DNA-directed RNA polymerase of Podospora anserina (Pleurage anserina).